A 212-amino-acid polypeptide reads, in one-letter code: MEKLNFLLKNTALLPTNLQKERLVQLVLLLNKWNKAYNLTSVRDPMEMLVKHILDSIVVSPYLQGNIFIDVGTGPGLPGLPLAIINPDKKFFLLDSLGKRISFIRNAVRELELTNVEPVLSRVEEFKPDHQFDGVLSRAFASLKDMTEWCQHLLTDQGFFYALKGQYNMEEVSALSAQFSVEKIIEMNVPELVGKRHLVLLKKIRINLMNYL.

Residues glycine 72, leucine 77, valine 123–glutamate 124, and arginine 138 contribute to the S-adenosyl-L-methionine site.

It belongs to the methyltransferase superfamily. RNA methyltransferase RsmG family.

It localises to the cytoplasm. The enzyme catalyses guanosine(527) in 16S rRNA + S-adenosyl-L-methionine = N(7)-methylguanosine(527) in 16S rRNA + S-adenosyl-L-homocysteine. Functionally, specifically methylates the N7 position of guanine in position 527 of 16S rRNA. This chain is Ribosomal RNA small subunit methyltransferase G, found in Histophilus somni (strain 129Pt) (Haemophilus somnus).